A 201-amino-acid polypeptide reads, in one-letter code: MQTSPLLESLMEALRCLPGVGPKSAQRMAFHLLQRDRSGGMRLAQALTRAMSEIGHCRDCRTFTEQEVCTICTNARRRENGQICVVESPADIHAIEQTGQYSGRYFVLMGHLSPLDGIGPQDIGLDRLEVRLSQEAVSEVILATNPTVEGEATANYIAEMCAAHGVLASRIAHGVPVGGELEMVDGTTLSHSLAGRHPVTR.

The segment at 57–72 adopts a C4-type zinc-finger fold; that stretch reads CRDCRTFTEQEVCTIC. A Toprim domain is found at 81-176; the sequence is GQICVVESPA…LASRIAHGVP (96 aa).

Belongs to the RecR family.

May play a role in DNA repair. It seems to be involved in an RecBC-independent recombinational process of DNA repair. It may act with RecF and RecO. The polypeptide is Recombination protein RecR (Edwardsiella ictaluri (strain 93-146)).